A 487-amino-acid chain; its full sequence is MKDILKLSIAEMHENLIKKEFSAVELTQTHIDAINNEQLNAFITKTPEVALDAARKADHILIHEQDKITPLTGIPVGIKDLFCTKNIKTTACSNILRNFTPQYDSTVVKRLIDDGAVMLGKLNMDEFAMGSSNSNSCFGPVENPWTRADGVKVVPGGSSGGSSAAVAGFLCAGALGSDTGGSVRQPAAFCGIVGLKPTYGRCSRLGMIAFASSLDQAGVLTRTVKDAALMLQPICGYDTQDSTSANITTPRFLDSITNIIKGKRIGIPKEYELSDKYKEYEEVSEMWLKGIKYLENEGAEIVNISLPHTSYALPVYYIICSAEASSNLARYDGIKYGTRVNSDNINEMYELTRGNNLGTEVKRRILIGAYALSSGYYDAYYNKAQCIRRLVTNDFVESFKSVDYILTPTAPKEAFAMDEQLDTLTMYLNDVFTVPASLAGLPAISIPIGLSKNKLPLSLQIIGNYYDEGGILNIASVIEKHTGNILK.

Active-site charge relay system residues include Lys-79 and Ser-158. Catalysis depends on Ser-182, which acts as the Acyl-ester intermediate.

It belongs to the amidase family. GatA subfamily. As to quaternary structure, heterotrimer of A, B and C subunits.

The catalysed reaction is L-glutamyl-tRNA(Gln) + L-glutamine + ATP + H2O = L-glutaminyl-tRNA(Gln) + L-glutamate + ADP + phosphate + H(+). Allows the formation of correctly charged Gln-tRNA(Gln) through the transamidation of misacylated Glu-tRNA(Gln) in organisms which lack glutaminyl-tRNA synthetase. The reaction takes place in the presence of glutamine and ATP through an activated gamma-phospho-Glu-tRNA(Gln). This is Glutamyl-tRNA(Gln) amidotransferase subunit A from Ehrlichia ruminantium (strain Welgevonden).